The following is a 325-amino-acid chain: Elongation factor P--(R)-beta-lysine ligase (325 aa).

Position 76–78 (76–78) interacts with substrate; the sequence is SPE. ATP contacts are provided by residues 100-102 and Asn109; that span reads RNE. Tyr118 is a substrate binding site. Position 244–245 (244–245) interacts with ATP; the sequence is EL. Glu251 is a binding site for substrate. Gly300 is an ATP binding site.

It belongs to the class-II aminoacyl-tRNA synthetase family. EpmA subfamily. As to quaternary structure, homodimer.

It carries out the reaction D-beta-lysine + L-lysyl-[protein] + ATP = N(6)-((3R)-3,6-diaminohexanoyl)-L-lysyl-[protein] + AMP + diphosphate + H(+). In terms of biological role, with EpmB is involved in the beta-lysylation step of the post-translational modification of translation elongation factor P (EF-P). Catalyzes the ATP-dependent activation of (R)-beta-lysine produced by EpmB, forming a lysyl-adenylate, from which the beta-lysyl moiety is then transferred to the epsilon-amino group of a conserved specific lysine residue in EF-P. The protein is Elongation factor P--(R)-beta-lysine ligase of Klebsiella pneumoniae subsp. pneumoniae (strain ATCC 700721 / MGH 78578).